Reading from the N-terminus, the 1256-residue chain is Pullulanase A (1256 aa).

Residues 1 to 44 (MRKTPSHTEKKMVYSIRSLKNGTGSVLIGASLVLLAMATPTISS) form the signal peptide. Residues 42–117 (ISSDESTPTT…VTTETKAEEP (76 aa)) are disordered. Over residues 48 to 61 (TPTTNEPNNRNTTT) the composition is skewed to low complexity. The span at 79-90 (DISSPRNANASL) shows a compositional bias: polar residues. Over residues 99-111 (TEPTTSTSPVTTE) the composition is skewed to low complexity. Residues 141-143 (WTW), Trp-153, Asp-199, 248-250 (WYW), Trp-261, Lys-303, and Asn-308 each bind substrate. Ca(2+)-binding residues include Ser-646 and Tyr-648. Substrate is bound by residues 652-653 (YD) and Phe-728. Asp-763 acts as the Nucleophile in catalysis. Glu-792 functions as the Proton donor in the catalytic mechanism. Trp-794 provides a ligand contact to substrate. The Ca(2+) site is built by Met-813, Thr-816, and Asp-817. Asp-824, Arg-827, and Tyr-834 together coordinate substrate. Residues Asp-867 and Asp-871 each contribute to the Ca(2+) site. Residues Asn-881, Lys-954, and 974–976 (DSY) contribute to the substrate site. Asp-977 lines the Ca(2+) pocket. The disordered stretch occupies residues 1126–1224 (SQNGTSHEST…TPDRQAELPN (99 aa)). Basic and acidic residues predominate over residues 1134–1172 (STAEEKPDSTPSKPEHQDPAPEARPDSTKPDAKVADAEN). Positions 1181-1194 (SQAEQPAQEAQASS) are enriched in low complexity. A compositionally biased stretch (polar residues) spans 1200–1210 (QNESVENSSKK). The LPXTG sorting signal signature appears at 1222–1226 (LPNTG). Residue Thr-1225 is modified to Pentaglycyl murein peptidoglycan amidated threonine. A propeptide spans 1226–1256 (GIKNENKLLFAGISLLALLGLGFLLKNKKEN) (removed by sortase).

Belongs to the glycosyl hydrolase 13 family.

The protein resides in the secreted. Its subcellular location is the cell wall. It is found in the cell surface. The enzyme catalyses Hydrolysis of (1-&gt;6)-alpha-D-glucosidic linkages in pullulan, amylopectin and glycogen, and in the alpha- and beta-limit dextrins of amylopectin and glycogen.. Inhibited by 4-O-alpha-D-glucopyranosylmoranoline (G1M). Functionally, virulence factor. Involved in the degradation of glycogen of the mammalian host cells. Hydrolyzes the alpha-1,6-branchpoints of glycogen. Hydrolyzes pullulan. Does not hydrolyze dextran. Binds to mouse lung alveolar type II cells that are rich in glycogen stores. Is an alpha-glucan-specific carbohydrate-binding protein, which binds to amylose (pure alpha-(1,4)-linked glucose), amylopectin (alpha-(1,4)-linked glucose with alpha-(1,6) branch points), pullulan (linear polymer of mixed alpha-(1,4)- and alpha-(1,6)-linked glucose) and glycogen (similar to amylopectin with more frequent alpha-(1,6) branch points) in vitro. Does not bind to dextran (a linear polymer of alpha-(1,6)-linked glucose). The protein is Pullulanase A of Streptococcus pneumoniae serotype 2 (strain D39 / NCTC 7466).